Reading from the N-terminus, the 395-residue chain is GPI-anchor transamidase (395 aa).

The first 27 residues, 1–27 (MAVTDSLSRAATVLATVLLLSFGSVAA), serve as a signal peptide directing secretion. The Lumenal portion of the chain corresponds to 28–368 (SHIEDQAEQF…PKLKDWHPPG (341 aa)). Residues aspartate 79, isoleucine 82, glutamate 118, and aspartate 120 each contribute to the Ca(2+) site. Histidine 164 (proton donor) is an active-site residue. Cysteine 206 acts as the Nucleophile; acyl-thioester intermediate in catalysis. Positions 206, 232, and 234 each coordinate a protein. The segment at 231-236 (DSLSHQ) is autoinhibitory loop. An intrachain disulfide couples cysteine 275 to cysteine 280. A helical membrane pass occupies residues 369–385 (GFILGLWALIIMVFFKT). Residues 386-395 (YGIKHMKFIF) are Cytoplasmic-facing.

This sequence belongs to the peptidase C13 family. Heteropentamer. Part of the GPI-anchor transamidase complex, consisting of PIGK, PIGT, PIGS, PIGU and GAA1. Interacts with GPAA1. Interacts with PIGT; this interaction, via a disulfide link, stabilizes the expression of GAA1 and PIGK and links them to PIGS. Post-translationally, the disulfide bond between PIGK/GPI8 and PIGT is important for normal enzyme activity.

The protein localises to the endoplasmic reticulum membrane. The protein operates within glycolipid biosynthesis; glycosylphosphatidylinositol-anchor biosynthesis. In the absence of proproteins substrates, exists in an inactive state with a disrupted catalytic site by an autoinhibitory loop. The binding of proprotein substrates, particularly the CSP region, to GPI-T triggers concerted conformational changes that alleviate the inhibition by the autoinhibitory loop. Meanwhile, proprotein residues near the omega- site induce the formation of a catalytic cleft for catalysis, following which the products are released and GPI-T reverts to the inactive state. Functionally, catalytic subunit of the glycosylphosphatidylinositol-anchor (GPI-anchor) transamidase (GPI-T) complex that catalyzes the formation of the linkage between a proprotein and a GPI-anchor and participates in GPI anchored protein biosynthesis. Recognizes diverse proproteins at a C-terminal signal peptide (CSP) region that lacks consensus sequence and replaces it with a GPI-anchor via a transamidation reaction. Transamidation catalysis reaction follows a two-phase mechanism. In the acyl-enzyme phase, the carbonyl group of the proproteins's omega-site undergoes a nucleophilic attack forming an enzyme-substrate thioester bond. Followed by a general acid catalysis that allows CSP releasing, regenerating the carbonyl, and forming the acyl-enzyme intermediate. In the GPI-anchor attachment phase, the amino group of the GPI-anchor's ethanolamine phosphate, the one on third mannose (EtNP3), mediates a nucleophilic attack on the carbonyl of the acyl-enzyme intermediate, replacing the CSP, allowing GPI-anchor attachment to the omega-residue, therefore forming the product and freeing the enzyme. The chain is GPI-anchor transamidase from Homo sapiens (Human).